The sequence spans 156 residues: Small ribosomal subunit protein uS7 (156 aa).

It belongs to the universal ribosomal protein uS7 family. In terms of assembly, part of the 30S ribosomal subunit. Contacts proteins S9 and S11.

Functionally, one of the primary rRNA binding proteins, it binds directly to 16S rRNA where it nucleates assembly of the head domain of the 30S subunit. Is located at the subunit interface close to the decoding center, probably blocks exit of the E-site tRNA. In Bacillus pumilus (strain SAFR-032), this protein is Small ribosomal subunit protein uS7.